We begin with the raw amino-acid sequence, 261 residues long: GTP cyclohydrolase FolE2 (261 aa).

This sequence belongs to the GTP cyclohydrolase IV family.

It carries out the reaction GTP + H2O = 7,8-dihydroneopterin 3'-triphosphate + formate + H(+). It functions in the pathway cofactor biosynthesis; 7,8-dihydroneopterin triphosphate biosynthesis; 7,8-dihydroneopterin triphosphate from GTP: step 1/1. Its function is as follows. Converts GTP to 7,8-dihydroneopterin triphosphate. The sequence is that of GTP cyclohydrolase FolE2 from Herminiimonas arsenicoxydans.